The sequence spans 218 residues: Small ribosomal subunit protein uS3c (218 aa).

Positions 47-118 (VQKNIRISSG…KLNIAITRIS (72 aa)) constitute a KH type-2 domain.

This sequence belongs to the universal ribosomal protein uS3 family. Part of the 30S ribosomal subunit.

It localises to the plastid. Its subcellular location is the chloroplast. In Arabis hirsuta (Hairy rock-cress), this protein is Small ribosomal subunit protein uS3c (rps3).